We begin with the raw amino-acid sequence, 604 residues long: MRVEDFTPKLIPASPGVYLMKDSSGEVLYIGKAKNLRNRISTYFRKDGDSRERIPFLMKKTTDIETILVSNETEAFLLENNLIKKYHPKYNVLLKDDKTFFCLAISLTHLWPKIDVVRTKAVTSSKKQIIFGPYVSAEACRTLLEVISQWFPLRTCSNREFASRKRPCILYEMKRCLAPCVNLCSHEEYEQTLDKAVLFLKGQISEIVQDLEKSIEKASKEQKFEQAGMYYRTLKLIQQAMEKQHVEKFHFQNIDAIGLYRKYQKTVITVLTIRSGKLLGARHFPFSENAQEDADVLSSFILQYYTNQPQTPKEILTPIPLNIPDLPSLLNKDTPPQLRSPKTGYGRELLNLAKNNAQVHAETTIQSSALPYEELKKILKSPDYPYRIECYDNAHLQGSHAVGVYIVYENDALSPKDYRTFSISSSAYNDLAAFHEVLSRRFISLTSSIPDMILIDGGRTQYAQAKKTLKELNLTGIQVVSIAKEAGNHSGSLKNEKLFCDTFPQGVLLPPTSKLLQFFQKLRDEAHRFALSRHRKKRHKDFLLPKEKIPGIGEIKRKRLLQKFKSWEQVMKASQGELEAIPGLTKKDIQHVLAKQAEDTYLED.

The GIY-YIG domain maps to 13-92; that stretch reads ASPGVYLMKD…IKKYHPKYNV (80 aa). Residues 205-240 enclose the UVR domain; sequence SEIVQDLEKSIEKASKEQKFEQAGMYYRTLKLIQQA.

It belongs to the UvrC family. As to quaternary structure, interacts with UvrB in an incision complex.

The protein localises to the cytoplasm. In terms of biological role, the UvrABC repair system catalyzes the recognition and processing of DNA lesions. UvrC both incises the 5' and 3' sides of the lesion. The N-terminal half is responsible for the 3' incision and the C-terminal half is responsible for the 5' incision. This Chlamydia abortus (strain DSM 27085 / S26/3) (Chlamydophila abortus) protein is UvrABC system protein C.